Here is a 342-residue protein sequence, read N- to C-terminus: MSQLSNPSQAFLRQRGQLSGRILLCSPPADAIAAELRQTGVEVSVLSWDHTAVNACRGAVAEEWLFTDLALPADAQWDQIALFMPKARELLDLMLSVVAPALKHAQHIWLVGEKREGVESAAKRLAKEDWDATKVDSARHCQVWSLTPPADWKPKQNDFWRAYELAQEKVDTLQLFTLPGVFSAGRLDEGTEVLLQSLPELHGRRLLDFGCGCGVIGATLKKRYPKASVELTDINLLALKSAARTAEANGVELNVYASDGLAEVQPGVDAIITNPPFHQGVKQDTRVTQQFLRDCARVLKPGGSLTLVANRFLPYPDWIEAHVGPVRVLFENSRFKVYHAVR.

It belongs to the methyltransferase superfamily. RsmC family. In terms of assembly, monomer.

It is found in the cytoplasm. The catalysed reaction is guanosine(1207) in 16S rRNA + S-adenosyl-L-methionine = N(2)-methylguanosine(1207) in 16S rRNA + S-adenosyl-L-homocysteine + H(+). Specifically methylates the guanine in position 1207 of 16S rRNA in the 30S particle. This Hahella chejuensis (strain KCTC 2396) protein is Ribosomal RNA small subunit methyltransferase C.